The sequence spans 486 residues: Monocarboxylate transporter 12 (486 aa).

At 1 to 9 (MTKITRVGS) the chain is on the cytoplasmic side. The next 6 helical transmembrane spans lie at 10 to 30 (ASPPDGGWGWMIVAGCFLVTI), 58 to 78 (AWIHSIVDCMTMLCAPLGSVV), 86 to 106 (AGIMLGGLLASTGLILGSFAT), 115 to 135 (LGVLTGLGFALCYSPAIAMVG), 148 to 168 (IAMSGSGIGTFILAPVVQLLI), and 177 to 197 (LLILGGFVLNLCVCGALMRPI). Over residues 201–220 (EDPSGPEKSHDRDAQREDCK) the composition is skewed to basic and acidic residues. The tract at residues 201-221 (EDPSGPEKSHDRDAQREDCKQ) is disordered. 6 helical membrane-spanning segments follow: residues 253–273 (FVVLAVSVLFMAYGCSPLFVY), 289–309 (AFLMSILGVIDIVGNITFGWL), 320–340 (YVCYLFAVALDGLCYLCLPML), 353–373 (FGYFDGAYVTLIPVVTAEIVG), 383–403 (VVYFLHAVPYLVSPPIAGWLV), and 410–430 (TAAFLLCGFAMIFSSILLGFA). At 431–486 (KIAKRMKRTQVPFLVKDSDPKLHLWTNGSVAYSIAKELDQKDEESLAKARTGCNLT) the chain is on the cytoplasmic side.

This sequence belongs to the major facilitator superfamily. Monocarboxylate porter (TC 2.A.1.13) family. In terms of assembly, interacts with isoform 2 of BSG; this interaction is required for its localization to the plasma membrane. As to expression, detected in kidney, choroid plexus, testis, lung, stomach, large and small intestine, spleen, fat and parotid gland. In eye, expressed in cornea, ciliary epithelium, lens epithelium and lens fiber.

Its subcellular location is the cell membrane. The protein localises to the basolateral cell membrane. It catalyses the reaction creatine(in) = creatine(out). It carries out the reaction guanidinoacetate(in) = guanidinoacetate(out). Creatine uptake is inhibited by carbonyl cyanide 3-chlorophenylhydrazone (CCCP) and by valinomycin. In terms of biological role, functions as a transporter for creatine and as well for its precursor guanidinoacetate. Transport of creatine and GAA is independent of resting membrane potential and extracellular Na(+), Cl(-), or pH. Contributes to the process of creatine biosynthesis and distribution. This Rattus norvegicus (Rat) protein is Monocarboxylate transporter 12.